Reading from the N-terminus, the 213-residue chain is Protein Tpen_0748 (213 aa).

The AMMECR1 domain occupies Glu-7–Glu-207.

In Thermofilum pendens (strain DSM 2475 / Hrk 5), this protein is Protein Tpen_0748.